A 132-amino-acid polypeptide reads, in one-letter code: Small ribosomal subunit protein uS11 (132 aa).

The segment at G108–V132 is disordered.

Belongs to the universal ribosomal protein uS11 family. As to quaternary structure, part of the 30S ribosomal subunit.

Its function is as follows. Located on the platform of the 30S subunit. The sequence is that of Small ribosomal subunit protein uS11 from Methanoregula boonei (strain DSM 21154 / JCM 14090 / 6A8).